Reading from the N-terminus, the 510-residue chain is Putative folylpolyglutamate synthase (510 aa).

Position 98–101 (98–101 (GKGS)) interacts with ATP. The Mg(2+) site is built by Ser-122, Glu-189, and His-217. Residues Arg-342 and Asp-357 each coordinate ATP.

The protein belongs to the folylpolyglutamate synthase family. A monovalent cation serves as cofactor.

The protein resides in the mitochondrion inner membrane. It localises to the mitochondrion matrix. Its subcellular location is the cytoplasm. The enzyme catalyses (6S)-5,6,7,8-tetrahydrofolyl-(gamma-L-Glu)(n) + L-glutamate + ATP = (6S)-5,6,7,8-tetrahydrofolyl-(gamma-L-Glu)(n+1) + ADP + phosphate + H(+). The protein operates within cofactor biosynthesis; tetrahydrofolylpolyglutamate biosynthesis. Its function is as follows. Catalyzes conversion of folates to polyglutamate derivatives allowing concentration of folate compounds in the cell and the intracellular retention of these cofactors, which are important substrates for most of the folate-dependent enzymes that are involved in one-carbon transfer reactions involved in purine, pyrimidine and amino acid synthesis. This is Putative folylpolyglutamate synthase from Caenorhabditis elegans.